The following is a 249-amino-acid chain: 3-deoxy-D-manno-octulosonic acid kinase (249 aa).

Residue Asp-175 is part of the active site.

Belongs to the protein kinase superfamily. KdkA/RfaP family.

The protein localises to the cell inner membrane. It carries out the reaction an alpha-Kdo-(2-&gt;6)-lipid IVA + ATP = a 4-O-phospho-alpha-Kdo-(2-&gt;6)-lipid IVA + ADP + H(+). The protein operates within bacterial outer membrane biogenesis; LPS core biosynthesis. In terms of biological role, catalyzes the ATP-dependent phosphorylation of the 3-deoxy-D-manno-octulosonic acid (Kdo) residue in Kdo-lipid IV(A) at the 4-OH position. This chain is 3-deoxy-D-manno-octulosonic acid kinase, found in Xanthomonas axonopodis pv. citri (strain 306).